Reading from the N-terminus, the 185-residue chain is Potassium-transporting ATPase KdpC subunit 2 (185 aa).

The chain crosses the membrane as a helical span at residues 8–28; it reads LGLVLIMFVLCGFIFPLTVTA.

This sequence belongs to the KdpC family. As to quaternary structure, the system is composed of three essential subunits: KdpA, KdpB and KdpC.

The protein resides in the cell membrane. It is found in the membrane raft. Functionally, part of the high-affinity ATP-driven potassium transport (or Kdp) system, which catalyzes the hydrolysis of ATP coupled with the electrogenic transport of potassium into the cytoplasm. This subunit acts as a catalytic chaperone that increases the ATP-binding affinity of the ATP-hydrolyzing subunit KdpB by the formation of a transient KdpB/KdpC/ATP ternary complex. This Staphylococcus aureus (strain Mu50 / ATCC 700699) protein is Potassium-transporting ATPase KdpC subunit 2.